Consider the following 200-residue polypeptide: Protein DMP7 (200 aa).

Transmembrane regions (helical) follow at residues 37–57 (LSNL…PVLT), 69–89 (WLTC…SFTD), 129–149 (ILDF…SMFD), and 167–187 (ILTS…LAFP).

This sequence belongs to the plant DMP1 protein family. In terms of tissue distribution, expressed in leaves, stems, flowers, siliques and roots, especially in the vasculature.

Its subcellular location is the endoplasmic reticulum membrane. In terms of biological role, involved in membrane remodeling. In Arabidopsis thaliana (Mouse-ear cress), this protein is Protein DMP7.